Here is a 193-residue protein sequence, read N- to C-terminus: Interleukin-18 (193 aa).

The propeptide occupies 1–36; the sequence is MAAEQVEDNCISFVEMKFINNTLYFVAENDEDLESD.

The protein belongs to the IL-1 family. In terms of assembly, forms a ternary complex with ligand-binding receptor subunit IL18R1 and signaling receptor subunit IL18RAP at the plasma membrane. Mature IL18 first binds to IL18R1 forming a low affinity binary complex, which then interacts with IL18RAP to form a high affinity ternary complex that signals inside the cell. Interacts with cargo receptor TMED10; the interaction mediates the translocation from the cytoplasm into the ERGIC (endoplasmic reticulum-Golgi intermediate compartment) and thereby secretion. Post-translationally, the pro-IL-18 precursor is processed by CASP1, CASP4 or CASP5 to yield its mature, active form. The pro-IL-18 precursor features autoinhibitory interactions between the propeptide and the post-cleavage-site region, preventing recognition by the IL18R1 receptor. Processing by CASP1, CASP4 or CASP5 induces conformational changes to generate critical receptor-binding sites. The mature form is then secreted and released in the extracellular milieu by passing through the gasdermin-D (GSDMD) pore. In contrast, cleavage by CASP3 inactivates IL18.

Its subcellular location is the cytoplasm. The protein resides in the cytosol. It localises to the secreted. Functionally, pro-inflammatory cytokine primarily involved in epithelial barrier repair, polarized T-helper 1 (Th1) cell and natural killer (NK) cell immune responses. Upon binding to IL18R1 and IL18RAP, forms a signaling ternary complex which activates NF-kappa-B, triggering synthesis of inflammatory mediators. Synergizes with IL12/interleukin-12 to induce IFNG synthesis from T-helper 1 (Th1) cells and natural killer (NK) cells. Involved in transduction of inflammation downstream of pyroptosis: its mature form is specifically released in the extracellular milieu by passing through the gasdermin-D (GSDMD) pore. This is Interleukin-18 (IL18) from Boselaphus tragocamelus (Nilgai).